The primary structure comprises 22 residues: Motilin (22 aa).

The disordered stretch occupies residues 1-22; that stretch reads FVPIFTHSELQKIREKERNKGQ. Residues 9-22 show a composition bias toward basic and acidic residues; sequence ELQKIREKERNKGQ.

This sequence belongs to the motilin family.

Its subcellular location is the secreted. Functionally, plays an important role in the regulation of interdigestive gastrointestinal motility and indirectly causes rhythmic contraction of duodenal and colonic smooth muscle. This Canis lupus familiaris (Dog) protein is Motilin (MLN).